The sequence spans 156 residues: Small ribosomal subunit protein uS7 (156 aa).

This sequence belongs to the universal ribosomal protein uS7 family. Part of the 30S ribosomal subunit. Contacts proteins S9 and S11.

One of the primary rRNA binding proteins, it binds directly to 16S rRNA where it nucleates assembly of the head domain of the 30S subunit. Is located at the subunit interface close to the decoding center, probably blocks exit of the E-site tRNA. The polypeptide is Small ribosomal subunit protein uS7 (Vibrio parahaemolyticus serotype O3:K6 (strain RIMD 2210633)).